The chain runs to 328 residues: Probable magnesium transporter NIPA6 (328 aa).

Residues M1–D4 are Extracellular-facing. The chain crosses the membrane as a helical span at residues N5–L25. At K26–P51 the chain is on the cytoplasmic side. A helical membrane pass occupies residues L52–I72. Topologically, residues Y73 to A76 are extracellular. The helical transmembrane segment at V77 to L97 threads the bilayer. Residues L98–K104 are Cytoplasmic-facing. The helical transmembrane segment at M105–P125 threads the bilayer. The Extracellular segment spans residues K126 to Q142. Residues P143–F163 traverse the membrane as a helical segment. Over E164–Y175 the chain is Cytoplasmic. The chain crosses the membrane as a helical span at residues I176–A196. The Extracellular portion of the chain corresponds to I197–Y209. Residues P210–L230 form a helical membrane-spanning segment. The Cytoplasmic segment spans residues N231–A240. The helical transmembrane segment at I241–M261 threads the bilayer. The Extracellular portion of the chain corresponds to F262–D269. Residues A270–L290 traverse the membrane as a helical segment. The Cytoplasmic segment spans residues H291–Y328.

Belongs to the NIPA (TC 2.A.7) family. In terms of assembly, homodimer.

Its subcellular location is the cell membrane. It localises to the early endosome. Functionally, acts as a Mg(2+) transporter. Can also transport other divalent cations such as Fe(2+), Sr(2+), Ba(2+), Mn(2+) and Co(2+) but to a much less extent than Mg(2+). This is Probable magnesium transporter NIPA6 from Arabidopsis thaliana (Mouse-ear cress).